The chain runs to 360 residues: Photosystem II protein D1 3 (360 aa).

The next 3 helical transmembrane spans lie at 29 to 46 (YVGW…TATI), 118 to 133 (HFLL…QWEL), and 142 to 156 (WICV…AAFA). Chlorophyll a is bound at residue H118. Pheophytin a is bound at residue Y126. Residues D170 and E189 each coordinate [CaMn4O5] cluster. The helical transmembrane segment at 197–218 (FHMLGVAGVFGGSLFSAMHGSL) threads the bilayer. Residue H198 coordinates chlorophyll a. A quinone is bound by residues H215 and 264-265 (SF). Position 215 (H215) interacts with Fe cation. Residue H272 participates in Fe cation binding. The helical transmembrane segment at 274–288 (FLGAWPVVGIWFTSM) threads the bilayer. Residues H332, E333, D342, and A344 each contribute to the [CaMn4O5] cluster site. A propeptide spanning residues 345–360 (AGEATPVALTAPSIHG) is cleaved from the precursor.

The protein belongs to the reaction center PufL/M/PsbA/D family. In terms of assembly, PSII is composed of 1 copy each of membrane proteins PsbA, PsbB, PsbC, PsbD, PsbE, PsbF, PsbH, PsbI, PsbJ, PsbK, PsbL, PsbM, PsbT, PsbX, PsbY, PsbZ, Psb30/Ycf12, peripheral proteins PsbO, CyanoQ (PsbQ), PsbU, PsbV and a large number of cofactors. It forms dimeric complexes. It depends on The D1/D2 heterodimer binds P680, chlorophylls that are the primary electron donor of PSII, and subsequent electron acceptors. It shares a non-heme iron and each subunit binds pheophytin, quinone, additional chlorophylls, carotenoids and lipids. D1 provides most of the ligands for the Mn4-Ca-O5 cluster of the oxygen-evolving complex (OEC). There is also a Cl(-1) ion associated with D1 and D2, which is required for oxygen evolution. The PSII complex binds additional chlorophylls, carotenoids and specific lipids. as a cofactor. Tyr-161 forms a radical intermediate that is referred to as redox-active TyrZ, YZ or Y-Z. Post-translationally, C-terminally processed by CtpA; processing is essential to allow assembly of the oxygen-evolving complex and thus photosynthetic growth.

The protein localises to the cellular thylakoid membrane. The catalysed reaction is 2 a plastoquinone + 4 hnu + 2 H2O = 2 a plastoquinol + O2. Functionally, photosystem II (PSII) is a light-driven water:plastoquinone oxidoreductase that uses light energy to abstract electrons from H(2)O, generating O(2) and a proton gradient subsequently used for ATP formation. It consists of a core antenna complex that captures photons, and an electron transfer chain that converts photonic excitation into a charge separation. The D1/D2 (PsbA/PsbD) reaction center heterodimer binds P680, the primary electron donor of PSII as well as several subsequent electron acceptors. This is Photosystem II protein D1 3 from Synechococcus sp. (strain ATCC 27144 / PCC 6301 / SAUG 1402/1) (Anacystis nidulans).